The primary structure comprises 254 residues: Nickel import ATP-binding protein NikO (254 aa).

The region spanning 5-246 (FELQGVQFAY…TALLRRARLL (242 aa)) is the ABC transporter domain. ATP is bound at residue 37–44 (GANGSGKS).

Belongs to the ABC transporter superfamily. In terms of assembly, forms an energy-coupling factor (ECF) transporter complex composed of an ATP-binding protein (A component, NikO), a transmembrane protein (T component, NikQ) and a fused possible substrate-capture protein (S component, NikMN) of unknown stoichimetry.

It is found in the cell inner membrane. The enzyme catalyses Ni(2+)(out) + ATP + H2O = Ni(2+)(in) + ADP + phosphate + H(+). Its function is as follows. Part of the energy-coupling factor (ECF) transporter complex NikMNQO involved in nickel import. The complex confers nickel uptake upon expression in E.coli. Shows very low activity with cobalt. Presumably responsible for energy coupling to the transport system. This is Nickel import ATP-binding protein NikO from Rhodobacter capsulatus (strain ATCC BAA-309 / NBRC 16581 / SB1003).